Reading from the N-terminus, the 123-residue chain is Large ribosomal subunit protein eL8 (123 aa).

This sequence belongs to the eukaryotic ribosomal protein eL8 family. In terms of assembly, part of the 50S ribosomal subunit. Probably part of the RNase P complex.

Its subcellular location is the cytoplasm. Multifunctional RNA-binding protein that recognizes the K-turn motif in ribosomal RNA, the RNA component of RNase P, box H/ACA, box C/D and box C'/D' sRNAs. This Methanobrevibacter smithii (strain ATCC 35061 / DSM 861 / OCM 144 / PS) protein is Large ribosomal subunit protein eL8.